A 633-amino-acid chain; its full sequence is Leucine-rich repeat and IQ domain-containing protein 3 (633 aa).

3 LRR repeats span residues 51 to 72 (SLRV…QSCK), 73 to 94 (KLIK…NFWS), and 98 to 119 (NLKL…CVLS). The 48-residue stretch at 132–179 (CPVSLKKGYRHVLVNSIWPLKALDHHVISDEEIIQNWRLPERFKTFSP) folds into the LRRCT domain. In terms of domain architecture, IQ spans 215–244 (HNSPVLIIQRWIRGFIVRKHLSPYFKHKKH). A disordered region spans residues 324 to 343 (SKQPRHHIHKGQKAMKAESE). Residues 325–336 (KQPRHHIHKGQK) show a composition bias toward basic residues. A coiled-coil region spans residues 556-617 (IEKWEEQKYK…AKVEYIKTFY (62 aa)).

This is Leucine-rich repeat and IQ domain-containing protein 3 (Lrriq3) from Mus musculus (Mouse).